We begin with the raw amino-acid sequence, 333 residues long: MKSRLHPDIEKAYAVLDTGEPLSLELASALGRLPDSEVLDLVSLANRVKARHAANHGAIHACSIMNAKSGVCGENCRFCAQSKHNSAEVDVYELVDENKVLEQARSAWEQGIGHFGIVTSGYGYLKVTPEFERILGMIDRLHRELPGLHVCASLGVLGDAPAAELARHGIAHYNINIQVDPARYGELIADTHAVNERIGTIRRLRSNGIGVCCGGILGVGETMQERIGMIFALRDLDVTVIPLNVLVPIDGTPLEGAAPVSVPEIAKTFAICRLAHPTKIIKFAAGRETVMKDFQGLLMLAGADGFLTGGYLTTRGRDISTDRQLARQLSKFS.

One can recognise a Radical SAM core domain in the interval 54–287 (ANHGAIHACS…TKIIKFAAGR (234 aa)). Residues Cys-72, Cys-76, and Cys-79 each contribute to the [4Fe-4S] cluster site. Residues Cys-151, Cys-212, and Lys-282 each contribute to the [2Fe-2S] cluster site.

This sequence belongs to the radical SAM superfamily. Biotin synthase family. In terms of assembly, homodimer. The cofactor is [4Fe-4S] cluster. [2Fe-2S] cluster is required as a cofactor.

The enzyme catalyses (4R,5S)-dethiobiotin + (sulfur carrier)-SH + 2 reduced [2Fe-2S]-[ferredoxin] + 2 S-adenosyl-L-methionine = (sulfur carrier)-H + biotin + 2 5'-deoxyadenosine + 2 L-methionine + 2 oxidized [2Fe-2S]-[ferredoxin]. It participates in cofactor biosynthesis; biotin biosynthesis; biotin from 7,8-diaminononanoate: step 2/2. In terms of biological role, catalyzes the conversion of dethiobiotin (DTB) to biotin by the insertion of a sulfur atom into dethiobiotin via a radical-based mechanism. This chain is Biotin synthase, found in Chlorobaculum tepidum (strain ATCC 49652 / DSM 12025 / NBRC 103806 / TLS) (Chlorobium tepidum).